A 470-amino-acid polypeptide reads, in one-letter code: Cysteine--tRNA ligase (470 aa).

Residue Cys31 participates in Zn(2+) binding. The 'HIGH' region signature appears at 33-43; the sequence is PTVYDYVHIGH. Positions 209, 234, and 238 each coordinate Zn(2+). The short motif at 266–270 is the 'KMSKS' region element; that stretch reads KMSKS. Lys269 is a binding site for ATP.

Belongs to the class-I aminoacyl-tRNA synthetase family. Zn(2+) serves as cofactor.

The protein localises to the cytoplasm. It carries out the reaction tRNA(Cys) + L-cysteine + ATP = L-cysteinyl-tRNA(Cys) + AMP + diphosphate. The protein is Cysteine--tRNA ligase of Saccharolobus solfataricus (strain ATCC 35092 / DSM 1617 / JCM 11322 / P2) (Sulfolobus solfataricus).